The sequence spans 187 residues: MSIKSDRWIRRAAEAGMIEPFEPGQVRTAGGNRIVSYGTSSYGYDVRCADEFKIFTNINSTIVDPKQFDEKSFVDFKGDVCIIPPNSFALARTVEYFRIPRSVLTICLGKSTYARCGIIVNVTPLEPEWEGHVTLEFSNTTPLPAKVYAGEGCAQMLFLESDEVCETSYRDRGGKYQGQRGVTLPRT.

Residues 110–115 (KSTYAR), 134–136 (TLE), Gln-155, Tyr-169, and Gln-179 contribute to the dCTP site. The active-site Proton donor/acceptor is the Glu-136.

This sequence belongs to the dCTP deaminase family. Homotrimer.

The enzyme catalyses dCTP + H2O + H(+) = dUTP + NH4(+). The protein operates within pyrimidine metabolism; dUMP biosynthesis; dUMP from dCTP (dUTP route): step 1/2. Functionally, catalyzes the deamination of dCTP to dUTP. The polypeptide is dCTP deaminase (Bordetella pertussis (strain Tohama I / ATCC BAA-589 / NCTC 13251)).